The sequence spans 88 residues: Large ribosomal subunit protein bL27 (88 aa).

The interval 1-24 (MATKKSGGSSGNGRDSRGRRLGVK) is disordered.

This sequence belongs to the bacterial ribosomal protein bL27 family.

The chain is Large ribosomal subunit protein bL27 from Ehrlichia canis (strain Jake).